A 306-amino-acid polypeptide reads, in one-letter code: Lipoyl synthase 2 (306 aa).

Residues C49, C54, C60, C75, C79, C82, and S300 each contribute to the [4Fe-4S] cluster site. One can recognise a Radical SAM core domain in the interval Y61–A289.

It belongs to the radical SAM superfamily. Lipoyl synthase family. The cofactor is [4Fe-4S] cluster.

Its subcellular location is the cytoplasm. It carries out the reaction [[Fe-S] cluster scaffold protein carrying a second [4Fe-4S](2+) cluster] + N(6)-octanoyl-L-lysyl-[protein] + 2 oxidized [2Fe-2S]-[ferredoxin] + 2 S-adenosyl-L-methionine + 4 H(+) = [[Fe-S] cluster scaffold protein] + N(6)-[(R)-dihydrolipoyl]-L-lysyl-[protein] + 4 Fe(3+) + 2 hydrogen sulfide + 2 5'-deoxyadenosine + 2 L-methionine + 2 reduced [2Fe-2S]-[ferredoxin]. It functions in the pathway protein modification; protein lipoylation via endogenous pathway; protein N(6)-(lipoyl)lysine from octanoyl-[acyl-carrier-protein]: step 2/2. Functionally, catalyzes the radical-mediated insertion of two sulfur atoms into the C-6 and C-8 positions of the octanoyl moiety bound to the lipoyl domains of lipoate-dependent enzymes, thereby converting the octanoylated domains into lipoylated derivatives. The sequence is that of Lipoyl synthase 2 from Prochlorococcus marinus (strain MIT 9313).